The sequence spans 356 residues: MIRISIDAMGGDHGPAVVIPALMTVATRRPDIRFVIYGREELVRPELAKFPKLAEVSEFFHCEIAVRMDDKPSQALRHGRWKSSMWKAVEAVKSGAADACISAGNTGALMAMSKFCLRTMATIDRPAIAALWPTLRGESVVLDVGATIGADAHQLIDFAILGTGMARSVFGVARPTVGLLNVGVEEIKGQEEVKEAGRMLREANMASMNYHGFVEGDDIGKGTVDVVVTEGFAGNIALKTAEGTARQIAGYLRAAMSRTLMAKIGYVFAKSAFDRLREKMDVGRSNGGVFLGLNGIVVKSHGGADSDGFAAAIELGYDMVRNNLLDRIEADLDLFHARNPHALSSRKSDVVTDAKE.

It belongs to the PlsX family. In terms of assembly, homodimer. Probably interacts with PlsY.

It localises to the cytoplasm. The enzyme catalyses a fatty acyl-[ACP] + phosphate = an acyl phosphate + holo-[ACP]. Its pathway is lipid metabolism; phospholipid metabolism. In terms of biological role, catalyzes the reversible formation of acyl-phosphate (acyl-PO(4)) from acyl-[acyl-carrier-protein] (acyl-ACP). This enzyme utilizes acyl-ACP as fatty acyl donor, but not acyl-CoA. This is Phosphate acyltransferase from Mesorhizobium japonicum (strain LMG 29417 / CECT 9101 / MAFF 303099) (Mesorhizobium loti (strain MAFF 303099)).